We begin with the raw amino-acid sequence, 116 residues long: UPF0134 protein MPN_038 (116 aa).

The protein belongs to the UPF0134 family.

The sequence is that of UPF0134 protein MPN_038 from Mycoplasma pneumoniae (strain ATCC 29342 / M129 / Subtype 1) (Mycoplasmoides pneumoniae).